Here is a 258-residue protein sequence, read N- to C-terminus: Imidazole glycerol phosphate synthase subunit HisF (258 aa).

Active-site residues include aspartate 11 and aspartate 130.

The protein belongs to the HisA/HisF family. Heterodimer of HisH and HisF.

The protein localises to the cytoplasm. It catalyses the reaction 5-[(5-phospho-1-deoxy-D-ribulos-1-ylimino)methylamino]-1-(5-phospho-beta-D-ribosyl)imidazole-4-carboxamide + L-glutamine = D-erythro-1-(imidazol-4-yl)glycerol 3-phosphate + 5-amino-1-(5-phospho-beta-D-ribosyl)imidazole-4-carboxamide + L-glutamate + H(+). It functions in the pathway amino-acid biosynthesis; L-histidine biosynthesis; L-histidine from 5-phospho-alpha-D-ribose 1-diphosphate: step 5/9. Functionally, IGPS catalyzes the conversion of PRFAR and glutamine to IGP, AICAR and glutamate. The HisF subunit catalyzes the cyclization activity that produces IGP and AICAR from PRFAR using the ammonia provided by the HisH subunit. The polypeptide is Imidazole glycerol phosphate synthase subunit HisF (Stenotrophomonas maltophilia (strain R551-3)).